Consider the following 164-residue polypeptide: Shikimate kinase (164 aa).

Residue 11 to 16 participates in ATP binding; it reads GSGKST. Serine 15 is a Mg(2+) binding site. Residues aspartate 33, arginine 57, and glycine 79 each coordinate substrate. Arginine 117 lines the ATP pocket. Arginine 134 contacts substrate.

It belongs to the shikimate kinase family. Monomer. Mg(2+) is required as a cofactor.

Its subcellular location is the cytoplasm. It carries out the reaction shikimate + ATP = 3-phosphoshikimate + ADP + H(+). It participates in metabolic intermediate biosynthesis; chorismate biosynthesis; chorismate from D-erythrose 4-phosphate and phosphoenolpyruvate: step 5/7. Functionally, catalyzes the specific phosphorylation of the 3-hydroxyl group of shikimic acid using ATP as a cosubstrate. This chain is Shikimate kinase, found in Persephonella marina (strain DSM 14350 / EX-H1).